Here is a 154-residue protein sequence, read N- to C-terminus: Ribosomal RNA large subunit methyltransferase H (154 aa).

S-adenosyl-L-methionine contacts are provided by residues Leu-70, Gly-102, and 121 to 126 (LSRLTF).

This sequence belongs to the RNA methyltransferase RlmH family. Homodimer.

It localises to the cytoplasm. The enzyme catalyses pseudouridine(1915) in 23S rRNA + S-adenosyl-L-methionine = N(3)-methylpseudouridine(1915) in 23S rRNA + S-adenosyl-L-homocysteine + H(+). Functionally, specifically methylates the pseudouridine at position 1915 (m3Psi1915) in 23S rRNA. This chain is Ribosomal RNA large subunit methyltransferase H, found in Geobacter metallireducens (strain ATCC 53774 / DSM 7210 / GS-15).